The primary structure comprises 457 residues: Solute carrier family 38 member 6 (457 aa).

Position 1 is an N-acetylmethionine (Met-1). Ser-4 and Ser-7 each carry phosphoserine. 5 helical membrane passes run 48-68 (FGLSVFNVMNAIMGSGILGLA), 70-90 (VMANTGILGFSFLLLLVALLA), 112-132 (LGLFAFGLPGKVVVAGTIIIQ), 171-191 (LLIIICVGIVFPLSLLPKIGF), and 192-212 (LGYTSSLSFFFMVFFALVVVI). The cysteines at positions 219 and 239 are disulfide-linked. An N-linked (GlcNAc...) asparagine glycan is attached at Asn-234. A helical membrane pass occupies residues 251-271 (VYAIPTMAFSFLCHTSVLPIY). N-linked (GlcNAc...) asparagine glycosylation is present at Asn-284. The next 5 membrane-spanning stretches (helical) occupy residues 289–309 (AIALSFLVYFVSALFGYLTFY), 328–348 (AAVMAVKLCILFAVLLTVPLI), 372–392 (SLTTLALNIIIVLLAIYVPDI), 395–415 (VFGVVGASTSTCLIFVFPGLF), and 432–452 (ALSLLSTGTVVGSFSLVLIIL).

The protein belongs to the amino acid/polyamine transporter 2 family.

The protein localises to the cell membrane. It localises to the synapse. It catalyses the reaction L-glutamine(out) = L-glutamine(in). The catalysed reaction is L-glutamate(out) = L-glutamate(in). Amino acid transporter with an apparent selectivity for L-glutamine and L-glutamate. May facilitate glutamine uptake in excitatory neurons. The transport mechanism remains to be elucidated. In Rattus norvegicus (Rat), this protein is Solute carrier family 38 member 6.